Reading from the N-terminus, the 267-residue chain is 5'-nucleotidase SurE (267 aa).

Residues Asp-9, Asp-10, Ser-40, and Asn-97 each contribute to the a divalent metal cation site.

Belongs to the SurE nucleotidase family. A divalent metal cation is required as a cofactor.

The protein resides in the cytoplasm. It carries out the reaction a ribonucleoside 5'-phosphate + H2O = a ribonucleoside + phosphate. In terms of biological role, nucleotidase that shows phosphatase activity on nucleoside 5'-monophosphates. The chain is 5'-nucleotidase SurE from Helicobacter pylori (strain G27).